The primary structure comprises 635 residues: MSGAIFAPLEGLSALDAASGHPLVCPLCHGQYERPCLLDCFHDFCTGCLRGRATDGRLSCPLCQHQTLVKGPSGLPPVDRLLQFLVDSSGDGSEAVRCANCDLECSQQDAETTYFCNTCGQPLCARCREETHRARMFARHDIVALGQRSRDVIQKCTLHSEPYIMFSTDKKSLLCIRCFRDMQGESRAHCVDLESAYVQGCERLEQAVLAVKALQTATKEAIALLQSMVEEVRHSAAEEEAAIHALFGSMQDRMAERKALLLQTVQSQYEEKDKAFKEQLTHLASLLPTLQVHLVICSSFLSLASKAEFLDLGYELMERLQGIVTRPHRLRPAQSSKIASDHRAEFARCLEPLLLLGPRREVSTVGGANTLSGGSSPMVLKTPSCPSPVGKMSGSPVQKPSPHRFISTKVLLAEGEDTPFTEHCRHYEDSYRGLQVEVQNLKDQVQELHRDLTKHHSLIKAEIMGDILRRSLLLDTQIASEYASLEGRRAIFQEIWEDSYQRVATQQEIYEAQLRDLLQLRQENAYLTIVTKQITPYIRSIARVKERLEPRFQVPVDEHAEHGQNMYDETPGRTDPGCTTEKRDKASEPNGSSWSLSSLPEGPSLKNQDHLRPKLEAGDEGWRAGSGSKGACYQA.

The segment at 25–64 (CPLCHGQYERPCLLDCFHDFCTGCLRGRATDGRLSCPLCQ) adopts an RING-type zinc-finger fold. The B box-type; atypical zinc-finger motif lies at 93–145 (SEAVRCANCDLECSQQDAETTYFCNTCGQPLCARCREETHRARMFARHDIVAL). 4 residues coordinate Zn(2+): C98, C101, C127, and H132. A coiled-coil region spans residues 422–460 (EHCRHYEDSYRGLQVEVQNLKDQVQELHRDLTKHHSLIK). Basic and acidic residues predominate over residues 553 to 562 (QVPVDEHAEH). The interval 553–635 (QVPVDEHAEH…SGSKGACYQA (83 aa)) is disordered. Over residues 589–598 (PNGSSWSLSS) the composition is skewed to polar residues. Positions 607–622 (NQDHLRPKLEAGDEGW) are enriched in basic and acidic residues.

As to quaternary structure, interacts with the core-glycosylated, but not the fully glycosylated form of KCNH2/HERG. Interacts with DNAJA1 and HSPA8. Interacts (via the C-terminus) with HSPA1A; this interaction additively increases KCNH2 expression.

The protein localises to the cytoplasm. In terms of biological role, plays a role in cardiac repolarization possibly by stabilizing membrane expression of the potassium channel KCNH2/HERG, or by assisting its synthesis, folding or export from the endoplasmic reticulum, in a heat shock protein-dependent manner. This is RING finger protein 207 (Rnf207) from Mus musculus (Mouse).